The primary structure comprises 288 residues: UPF0761 membrane protein HS_0693 (288 aa).

Helical transmembrane passes span 36 to 56, 92 to 112, 127 to 147, 176 to 196, 200 to 220, and 240 to 260; these read TLAL…FPVF, QMSA…IHSI, PAIF…IVIA, LLSL…YMVV, KVSI…FTLG, and AMAT…AVLL.

It belongs to the UPF0761 family.

Its subcellular location is the cell inner membrane. The polypeptide is UPF0761 membrane protein HS_0693 (Histophilus somni (strain 129Pt) (Haemophilus somnus)).